Here is an 895-residue protein sequence, read N- to C-terminus: Splicing factor 3B subunit 2 (895 aa).

Residues 1–10 (MATEHPEPPK) are compositionally biased toward basic and acidic residues. Disordered stretches follow at residues 1–24 (MATE…PGHY), 65–136 (LNRP…LRVG), 197–373 (AKMG…EYVT), and 400–453 (KKEK…SKKK). Residue Lys-10 forms a Glycyl lysine isopeptide (Lys-Gly) (interchain with G-Cter in SUMO2) linkage. An SAP domain is found at 24–58 (YGAWAAQELQAKLAEIGAPIQGNREELVERLQSYT). Pro residues-rich tracts occupy residues 90-114 (IPMP…PPPG) and 122-133 (AHPPNLGPPPPL). A coiled-coil region spans residues 140-199 (ALSEEERLKLAQQQAALLMQQEERAKQQGDHSLKEHELLEQQKRAAVLLEQERQQEIAKM). Residues 218–238 (PLGPRVAAPVGPVGPTPTVLP) are compositionally biased toward low complexity. Omega-N-methylarginine occurs at positions 222, 245, and 247. The span at 241-254 (APVPRPRGPPPPPG) shows a compositional bias: pro residues. Lys-275 carries the N6-acetyllysine modification. Residues 277–286 (LQLKESRQEE) are compositionally biased toward basic and acidic residues. Lys-280 participates in a covalent cross-link: Glycyl lysine isopeptide (Lys-Gly) (interchain with G-Cter in SUMO2). Residue Ser-289 is modified to Phosphoserine. Thr-298 carries the phosphothreonine modification. 2 positions are modified to phosphoserine: Ser-307 and Ser-309. Residue Thr-311 is modified to Phosphothreonine. Ser-317 is subject to Phosphoserine. A compositionally biased stretch (basic residues) spans 322-338 (EKNRKRRNRKKKKKPQR). Basic and acidic residues predominate over residues 347–359 (SGDREKDSTRSRG). 2 positions are modified to phosphoserine: Ser-360 and Ser-362. Residues Lys-400 and Lys-412 each participate in a glycyl lysine isopeptide (Lys-Gly) (interchain with G-Cter in SUMO2) cross-link. 2 stretches are compositionally biased toward basic and acidic residues: residues 400–414 (KKEK…DKLE) and 422–431 (KGFEEEHKDS). The required for interaction with PRMT9 stretch occupies residues 401–550 (KEKEKEPEKL…QEKEEQKTMK (150 aa)). A phosphoserine mark is found at Ser-431, Ser-435, and Ser-436. Lys-492 is covalently cross-linked (Glycyl lysine isopeptide (Lys-Gly) (interchain with G-Cter in SUMO2)). An Omega-N-methylarginine; by PRMT9; alternate modification is found at Arg-508. Position 508 is a symmetric dimethylarginine; by PRMT9; alternate (Arg-508). At Arg-515 the chain carries Omega-N-methylarginine. A Glycyl lysine isopeptide (Lys-Gly) (interchain with G-Cter in SUMO2) cross-link involves residue Lys-543. The disordered stretch occupies residues 691-757 (AAEFQTKTEE…PGGFSSVPAG (67 aa)). Over residues 712-732 (EPSDEESSEEEEEEESDEDKP) the composition is skewed to acidic residues. Lys-770 is covalently cross-linked (Glycyl lysine isopeptide (Lys-Gly) (interchain with G-Cter in SUMO2)). Thr-780 carries the post-translational modification Phosphothreonine. Glycyl lysine isopeptide (Lys-Gly) (interchain with G-Cter in SUMO2) cross-links involve residues Lys-790, Lys-843, and Lys-857. The span at 844-869 (YEEHVREQQAQVEKEDFSDMVAEHAA) shows a compositional bias: basic and acidic residues. The tract at residues 844–895 (YEEHVREQQAQVEKEDFSDMVAEHAAKQKQKKRKAQPQDSRGGSKKYKEFKF) is disordered. A Phosphoserine modification is found at Ser-861.

Component of the 17S U2 SnRNP complex, a ribonucleoprotein complex that contains small nuclear RNA (snRNA) U2 and a number of specific proteins. Part of the SF3B subcomplex of the 17S U2 SnRNP complex. SF3B associates with the splicing subcomplex SF3A and a 12S RNA unit to form the U2 small nuclear ribonucleoproteins complex (U2 snRNP). Within the SF3B complex, interacts directly with SF3B4. Found in a complex with PRMT9, SF3B2 and SF3B4. Interacts (Arg-508-methylated form) with SMN1 (via Tudor domain). Interacts with RBM7. Interacts with ERCC6. Component of the minor spliceosome. Within this complex, interacts with SCNM1 and CRIPT. As to quaternary structure, (Microbial infection) Interacts with HIV-1 Vpr. Post-translationally, methylation at Arg-508 by PRMT9 is required for the interaction with SMN1.

Its subcellular location is the nucleus. The protein resides in the nucleus speckle. In terms of biological role, component of the 17S U2 SnRNP complex of the spliceosome, a large ribonucleoprotein complex that removes introns from transcribed pre-mRNAs. The 17S U2 SnRNP complex (1) directly participates in early spliceosome assembly and (2) mediates recognition of the intron branch site during pre-mRNA splicing by promoting the selection of the pre-mRNA branch-site adenosine, the nucleophile for the first step of splicing. Within the 17S U2 SnRNP complex, SF3B2 is part of the SF3B subcomplex, which is required for 'A' complex assembly formed by the stable binding of U2 snRNP to the branchpoint sequence in pre-mRNA. Sequence independent binding of SF3A and SF3B subcomplexes upstream of the branch site is essential, it may anchor U2 snRNP to the pre-mRNA. May also be involved in the assembly of the 'E' complex. Also acts as a component of the minor spliceosome, which is involved in the splicing of U12-type introns in pre-mRNAs. The protein is Splicing factor 3B subunit 2 (SF3B2) of Homo sapiens (Human).